Consider the following 121-residue polypeptide: Large ribosomal subunit protein bL12 (121 aa).

It belongs to the bacterial ribosomal protein bL12 family. In terms of assembly, homodimer. Part of the ribosomal stalk of the 50S ribosomal subunit. Forms a multimeric L10(L12)X complex, where L10 forms an elongated spine to which 2 to 4 L12 dimers bind in a sequential fashion. Binds GTP-bound translation factors.

Functionally, forms part of the ribosomal stalk which helps the ribosome interact with GTP-bound translation factors. Is thus essential for accurate translation. In Lactococcus lactis subsp. lactis (strain IL1403) (Streptococcus lactis), this protein is Large ribosomal subunit protein bL12.